A 198-amino-acid polypeptide reads, in one-letter code: MRKSKRERQRLLQETIQENPFITDEELAEKFSVSVQTIRLDRLELSIPELRERIKHVAQQSLADKVRSLPIEEVIGEIIDIEPDHSAISIFDVKSEHVFKRNRIARGHHLFAQANSLAVAVINDELALTAKANIRFTRQVKENERVVAKAKVVGEKENGRTIVEVNSYVGQELVFSGTFEMYRSNREKKDGDSNENSN.

A MaoC-like domain is found at 102-169 (NRIARGHHLF…RTIVEVNSYV (68 aa)).

This sequence belongs to the FapR family.

Transcriptional factor involved in regulation of membrane lipid biosynthesis by repressing genes involved in fatty acid and phospholipid metabolism. This Geobacillus sp. (strain WCH70) protein is Transcription factor FapR.